The primary structure comprises 107 residues: Large ribosomal subunit protein uL24 (107 aa).

This sequence belongs to the universal ribosomal protein uL24 family. Part of the 50S ribosomal subunit.

Its function is as follows. One of two assembly initiator proteins, it binds directly to the 5'-end of the 23S rRNA, where it nucleates assembly of the 50S subunit. One of the proteins that surrounds the polypeptide exit tunnel on the outside of the subunit. This Caldanaerobacter subterraneus subsp. tengcongensis (strain DSM 15242 / JCM 11007 / NBRC 100824 / MB4) (Thermoanaerobacter tengcongensis) protein is Large ribosomal subunit protein uL24.